The sequence spans 355 residues: Peptide chain release factor 1 (355 aa).

Q231 bears the N5-methylglutamine mark. A compositionally biased stretch (basic and acidic residues) spans 283–292 (LAKETSERKS). Residues 283-306 (LAKETSERKSQVGTGDRSGRIRTY) form a disordered region.

The protein belongs to the prokaryotic/mitochondrial release factor family. Methylated by PrmC. Methylation increases the termination efficiency of RF1.

Its subcellular location is the cytoplasm. Its function is as follows. Peptide chain release factor 1 directs the termination of translation in response to the peptide chain termination codons UAG and UAA. In Campylobacter concisus (strain 13826), this protein is Peptide chain release factor 1.